A 725-amino-acid polypeptide reads, in one-letter code: ABC transporter G family member 19 (725 aa).

The 253-residue stretch at 73 to 325 (LNFNNLQYDV…FSDFGRPIPE (253 aa)) folds into the ABC transporter domain. Residue 117–124 (GASGAGKS) coordinates ATP. Residues 419–629 (FETFILAKRY…PYEAVLINEF (211 aa)) form the ABC transmembrane type-2 domain. The next 7 membrane-spanning stretches (helical) occupy residues 438–458 (LVGT…TVYW), 473–493 (LFAF…PVFI), 515–535 (ISHS…FSAI), 537–557 (FWTV…LLIY), 577–597 (IMLC…LSGF), 606–626 (FYWT…AVLI), and 698–718 (LWIT…ALLF).

It belongs to the ABC transporter superfamily. ABCG family. Eye pigment precursor importer (TC 3.A.1.204) subfamily.

The protein localises to the vacuole membrane. Its function is as follows. Confers selective resistance to kanamycin. The polypeptide is ABC transporter G family member 19 (ABCG19) (Arabidopsis thaliana (Mouse-ear cress)).